Consider the following 107-residue polypeptide: Replication restart protein PriB (107 aa).

Residues 1–97 form the SSB domain; the sequence is MNTLELSARV…LHLQQARRIA (97 aa).

Belongs to the PriB family. Homodimer. Interacts with PriA and DnaT. Component of the replication restart primosome. Primosome assembly occurs via a 'hand-off' mechanism. PriA binds to replication forks, subsequently PriB then DnaT bind; DnaT then displaces ssDNA to generate the helicase loading substrate.

In terms of biological role, involved in the restart of stalled replication forks, which reloads the replicative helicase on sites other than the origin of replication; the PriA-PriB pathway is the major replication restart pathway. During primosome assembly it facilitates complex formation between PriA and DnaT on DNA; stabilizes PriA on DNA. Stimulates the DNA unwinding activity of PriA helicase. The protein is Replication restart protein PriB of Bordetella parapertussis (strain 12822 / ATCC BAA-587 / NCTC 13253).